The following is a 405-amino-acid chain: Argininosuccinate synthase (405 aa).

ATP-binding positions include 10-18 and alanine 37; that span reads AYSGGLDTS. 2 residues coordinate L-citrulline: tyrosine 88 and serine 93. Position 118 (glycine 118) interacts with ATP. Positions 120, 124, and 125 each coordinate L-aspartate. Asparagine 124 provides a ligand contact to L-citrulline. 5 residues coordinate L-citrulline: arginine 128, serine 177, serine 186, glutamate 263, and tyrosine 275.

This sequence belongs to the argininosuccinate synthase family. Type 1 subfamily. In terms of assembly, homotetramer.

The protein localises to the cytoplasm. The enzyme catalyses L-citrulline + L-aspartate + ATP = 2-(N(omega)-L-arginino)succinate + AMP + diphosphate + H(+). It functions in the pathway amino-acid biosynthesis; L-arginine biosynthesis; L-arginine from L-ornithine and carbamoyl phosphate: step 2/3. The protein is Argininosuccinate synthase of Acetivibrio thermocellus (strain ATCC 27405 / DSM 1237 / JCM 9322 / NBRC 103400 / NCIMB 10682 / NRRL B-4536 / VPI 7372) (Clostridium thermocellum).